The primary structure comprises 242 residues: MDVARDMEKNTTAMGQLMSSSATTAATATGPASPKRPAGRTKFQETRHPVFRGVRRRGRAGRWVCEVRVPGSRGDRLWVGTFDTAEEAARAHDAAMLALCGASASLNFADSAWLLHVPRAPVASGHDQLPDVQRAASEAVAEFQRRGSTAATATATSGDAASTAPPSSSPVLSPNDDNASSASTPAVAAALDHGDMFGGMRTDLYFASLAQGLLIEPPPPPTTAEGFCDDEGCGGAEMELWS.

The segment covering 20–29 (SSATTAATAT) has biased composition (low complexity). The tract at residues 20-44 (SSATTAATATGPASPKRPAGRTKFQ) is disordered. Residues 50–109 (VFRGVRRRGRAGRWVCEVRVPGSRGDRLWVGTFDTAEEAARAHDAAMLALCGASASLNFA) constitute a DNA-binding region (AP2/ERF). A disordered region spans residues 143–184 (FQRRGSTAATATATSGDAASTAPPSSSPVLSPNDDNASSAST). Residues 148-184 (STAATATATSGDAASTAPPSSSPVLSPNDDNASSAST) are compositionally biased toward low complexity.

This sequence belongs to the AP2/ERF transcription factor family. ERF subfamily.

The protein resides in the nucleus. Transcriptional activator that binds specifically to the DNA sequence 5'-[AG]CCGAC-3'. Binding to the C-repeat/DRE element mediates high salinity- and dehydration-inducible transcription. In Oryza sativa subsp. japonica (Rice), this protein is Dehydration-responsive element-binding protein 1J (DREB1J).